The following is a 123-amino-acid chain: Transmembrane protein 254 (123 aa).

3 helical membrane passes run 15–35, 63–83, and 95–115; these read LFWF…VFWP, NGYW…LVLC, and LLWF…LIAY.

It is found in the membrane. This Mus musculus (Mouse) protein is Transmembrane protein 254.